The primary structure comprises 1187 residues: MDPSALDMAIQHALAGLYPPFEATAPTVLGQVFRLLDSDFRGDGLSFLLDFLIPAKRLCEQVREAACALYTHCLFLHEGWPLCLRDEVVVHLAPLNPLLLRQGDFYLQVESWEEQSVHMTLKCLSSDLREVDKKPIPESSYSLIFTPEWLEAINNDFEGRPLHNCLVASENGITPVPWTKITSPEFVDDRPPIVKVPSSDGDSCPLEDLHLSRPQEPYQAGDLGGKGSVAQIWDKGKGKLSGDKYPGLIKVEPARSGQLAFRTDSEASQSLEGDYVALLGFPQEYRGASPDSEVVTLSVDIQKSQETRPRTKGAPLLGKTLPLSGPAGAPPLGRWACERPAGSGEKPCSGGSRRKARHKASGHTAVRQPQQPHTSVPEKLPDCTSGLVEDTEEEPAASEMQKPVGMPEAMVRLRPGPRQAFSPLLSSAGPGSPAAETKTEETTLGHGRASKPEDCLNKNASFHGSPAPGLQFSFLKEQRVPHVTPEKALLQHARPRKALCPLYSLQPCEAKAPGKDGTTLPTTSGSGPLSGEPPGFRRDSAGPPGGGLRLEECSRTKPRIETLGVKLLQSGIACLPGGRDKVGRPLLLVSTAEDAWEAPWCTTSEVAELLSYLCSVPRLEDKAKGLLVVIDARKGTQRPGLVSALQGIQALAPASVSKVLLLGEKASIPQLSVLPAQVEVLTSLKALRNHVDPSQLPEALEGPFPYHHSEWVQFFQKLDPFLTDLRQASSLLQASIQEFEKGEPPGGVQEATRCLSKSKELMETVLRDPGLLALQREGGTTLASLQQEASGLNANPDVRSHLTEAAALYNLVDGQLHDLVTASNQLLRRLELRVRLGHLETAIHQVSDWMAGEGSQSLQALAPVHVCAETVEKVHAEFEDFFLQVAAQYRQGLDLSKQAAQLGAAEEGAGEMGLPDLAAFASTQQAFQARLTHFYMAAERQRTDLETLLHLHRFRRKMSRFHMDCQNLLTQLSLGKAVKASPGDQLHLRLHCYLKRLASEFQTEKLLAMKLQVASLSRPGLGQEVWEEAQERHQEIQSLLRKALAYCPCPEVPATQVALIDRSRPVAKGQGLPREVGSKWDRSLQDSLAVDHVFKSQRTPQGEQSRNMWAGLLSPEPGQSGDTEEVRGTPKLPDPTLERLLASLFSWPHLPKQSKASRPTGGSFSSEGTGSQTSLEDSPHTSPPASL.

5 disordered regions span residues 302 to 405 (QKSQ…KPVG), 419 to 451 (QAFS…RASK), 511 to 551 (KAPG…LRLE), 1095 to 1134 (KSQR…KLPD), and 1148 to 1187 (PHLP…PASL). The segment covering 321–333 (LPLSGPAGAPPLG) has biased composition (low complexity). Basic residues predominate over residues 352–361 (SRRKARHKAS). Low complexity-rich tracts occupy residues 422 to 435 (SPLL…SPAA) and 517 to 534 (GTTL…GEPP). The segment covering 1096 to 1107 (SQRTPQGEQSRN) has biased composition (polar residues). The segment covering 1160–1174 (TGGSFSSEGTGSQTS) has biased composition (low complexity).

This is an uncharacterized protein from Mus musculus (Mouse).